Reading from the N-terminus, the 41-residue chain is Competence-stimulating peptide type 1 (41 aa).

A propeptide spanning residues 1–24 is cleaved from the precursor; it reads MKNTVKLEQFVALKEKDLQKIKGG.

The protein belongs to the ComC family.

The protein localises to the secreted. Acts as a pheromone, induces cells to develop competence for genetic transformation. This chain is Competence-stimulating peptide type 1 (comC1), found in Streptococcus pneumoniae.